A 447-amino-acid chain; its full sequence is GTPase Der (447 aa).

EngA-type G domains are found at residues 3–167 and 180–353; these read PVIA…ALPE and IRLA…KSAN. GTP is bound by residues 9–16, 56–60, 119–122, 186–193, 233–237, and 298–301; these read GRPNVGKS, DTGGF, NKAE, DTAGL, and NKWD. The 85-residue stretch at 354 to 438 folds into the KH-like domain; the sequence is RKMPTPVLTR…PLRIEMKTSS (85 aa).

Belongs to the TRAFAC class TrmE-Era-EngA-EngB-Septin-like GTPase superfamily. EngA (Der) GTPase family. As to quaternary structure, associates with the 50S ribosomal subunit.

In terms of biological role, GTPase that plays an essential role in the late steps of ribosome biogenesis. This is GTPase Der from Acidovorax ebreus (strain TPSY) (Diaphorobacter sp. (strain TPSY)).